The primary structure comprises 149 residues: General odorant-binding protein 99b (149 aa).

The first 16 residues, 1–16 (MKVLIVLLLGLAFVLA), serve as a signal peptide directing secretion. 3 cysteine pairs are disulfide-bonded: C40–C71, C67–C125, and C114–C134.

Belongs to the PBP/GOBP family. As to expression, expressed in adult olfactory system. Expressed in subsets of sensilla in both olfactory organs, the maxillary palps, and third antennal segments.

It is found in the secreted. Its function is as follows. Present in the aqueous fluid surrounding olfactory sensory dendrites and are thought to aid in the capture and transport of hydrophobic odorants into and through this fluid. This chain is General odorant-binding protein 99b (Obp99b), found in Drosophila melanogaster (Fruit fly).